The primary structure comprises 139 residues: Nucleoside diphosphate kinase (139 aa).

Residues lysine 11, phenylalanine 59, arginine 87, threonine 93, arginine 104, and asparagine 114 each contribute to the ATP site. The active-site Pros-phosphohistidine intermediate is the histidine 117.

The protein belongs to the NDK family. Homotetramer. The cofactor is Mg(2+).

It localises to the cytoplasm. It catalyses the reaction a 2'-deoxyribonucleoside 5'-diphosphate + ATP = a 2'-deoxyribonucleoside 5'-triphosphate + ADP. The enzyme catalyses a ribonucleoside 5'-diphosphate + ATP = a ribonucleoside 5'-triphosphate + ADP. Functionally, major role in the synthesis of nucleoside triphosphates other than ATP. The ATP gamma phosphate is transferred to the NDP beta phosphate via a ping-pong mechanism, using a phosphorylated active-site intermediate. The sequence is that of Nucleoside diphosphate kinase from Wolbachia sp. subsp. Brugia malayi (strain TRS).